Here is a 368-residue protein sequence, read N- to C-terminus: 1-deoxy-D-xylulose 5-phosphate reductoisomerase (368 aa).

NADPH contacts are provided by threonine 7, glycine 8, serine 9, isoleucine 10, glycine 31, lysine 32, asparagine 33, and asparagine 113. Residue lysine 114 coordinates 1-deoxy-D-xylulose 5-phosphate. Residue glutamate 115 participates in NADPH binding. A Mn(2+)-binding site is contributed by aspartate 133. 1-deoxy-D-xylulose 5-phosphate is bound by residues serine 134, glutamate 135, serine 158, and histidine 181. Glutamate 135 contacts Mn(2+). Glycine 187 provides a ligand contact to NADPH. Serine 194, asparagine 199, lysine 200, and glutamate 203 together coordinate 1-deoxy-D-xylulose 5-phosphate. Glutamate 203 serves as a coordination point for Mn(2+).

The protein belongs to the DXR family. Mg(2+) serves as cofactor. Requires Mn(2+) as cofactor.

It carries out the reaction 2-C-methyl-D-erythritol 4-phosphate + NADP(+) = 1-deoxy-D-xylulose 5-phosphate + NADPH + H(+). It participates in isoprenoid biosynthesis; isopentenyl diphosphate biosynthesis via DXP pathway; isopentenyl diphosphate from 1-deoxy-D-xylulose 5-phosphate: step 1/6. Catalyzes the NADPH-dependent rearrangement and reduction of 1-deoxy-D-xylulose-5-phosphate (DXP) to 2-C-methyl-D-erythritol 4-phosphate (MEP). The protein is 1-deoxy-D-xylulose 5-phosphate reductoisomerase of Helicobacter pylori (strain Shi470).